We begin with the raw amino-acid sequence, 183 residues long: Shikimate kinase (183 aa).

25–30 (GAGKTT) provides a ligand contact to ATP. Thr-29 serves as a coordination point for Mg(2+). Residues Asp-47, Arg-71, and Gly-93 each contribute to the substrate site. An ATP-binding site is contributed by Arg-131. Residue Arg-150 participates in substrate binding.

Belongs to the shikimate kinase family. As to quaternary structure, monomer. Mg(2+) serves as cofactor.

The protein resides in the cytoplasm. It carries out the reaction shikimate + ATP = 3-phosphoshikimate + ADP + H(+). It participates in metabolic intermediate biosynthesis; chorismate biosynthesis; chorismate from D-erythrose 4-phosphate and phosphoenolpyruvate: step 5/7. In terms of biological role, catalyzes the specific phosphorylation of the 3-hydroxyl group of shikimic acid using ATP as a cosubstrate. This is Shikimate kinase from Dechloromonas aromatica (strain RCB).